Here is a 209-residue protein sequence, read N- to C-terminus: NADH-quinone oxidoreductase subunit C (209 aa).

Belongs to the complex I 30 kDa subunit family. As to quaternary structure, NDH-1 is composed of 14 different subunits. Subunits NuoB, C, D, E, F, and G constitute the peripheral sector of the complex.

It is found in the cell inner membrane. It catalyses the reaction a quinone + NADH + 5 H(+)(in) = a quinol + NAD(+) + 4 H(+)(out). NDH-1 shuttles electrons from NADH, via FMN and iron-sulfur (Fe-S) centers, to quinones in the respiratory chain. The immediate electron acceptor for the enzyme in this species is believed to be ubiquinone. Couples the redox reaction to proton translocation (for every two electrons transferred, four hydrogen ions are translocated across the cytoplasmic membrane), and thus conserves the redox energy in a proton gradient. This chain is NADH-quinone oxidoreductase subunit C, found in Xanthobacter autotrophicus (strain ATCC BAA-1158 / Py2).